A 235-amino-acid chain; its full sequence is 2-C-methyl-D-erythritol 4-phosphate cytidylyltransferase (235 aa).

The protein belongs to the IspD/TarI cytidylyltransferase family. IspD subfamily.

It catalyses the reaction 2-C-methyl-D-erythritol 4-phosphate + CTP + H(+) = 4-CDP-2-C-methyl-D-erythritol + diphosphate. Its pathway is isoprenoid biosynthesis; isopentenyl diphosphate biosynthesis via DXP pathway; isopentenyl diphosphate from 1-deoxy-D-xylulose 5-phosphate: step 2/6. Catalyzes the formation of 4-diphosphocytidyl-2-C-methyl-D-erythritol from CTP and 2-C-methyl-D-erythritol 4-phosphate (MEP). The polypeptide is 2-C-methyl-D-erythritol 4-phosphate cytidylyltransferase (Pseudomonas putida (strain ATCC 700007 / DSM 6899 / JCM 31910 / BCRC 17059 / LMG 24140 / F1)).